Reading from the N-terminus, the 524-residue chain is Chromosomal replication initiator protein DnaA (524 aa).

Residues 1 to 85 form a domain I, interacts with DnaA modulators region; the sequence is MSQNSSSLLE…TRVLSLRMGR (85 aa). The tract at residues 85–182 is domain II; it reads RSFSLAVSVE…TPAHNPNREV (98 aa). A disordered region spans residues 95–183; sequence PEQEIPETPA…PAHNPNREVS (89 aa). Residues 148-158 are compositionally biased toward pro residues; that stretch reads APEPHPAPIAD. Residues 183-399 are domain III, AAA+ region; it reads SLNPKYTFES…GALIRVSAYS (217 aa). 4 residues coordinate ATP: G227, G229, K230, and T231. The interval 400 to 524 is domain IV, binds dsDNA; it reads SLINQPIDKE…TQLIKSRGRN (125 aa).

It belongs to the DnaA family. Oligomerizes as a right-handed, spiral filament on DNA at oriC.

The protein resides in the cytoplasm. In terms of biological role, plays an essential role in the initiation and regulation of chromosomal replication. ATP-DnaA binds to the origin of replication (oriC) to initiate formation of the DNA replication initiation complex once per cell cycle. Binds the DnaA box (a 9 base pair repeat at the origin) and separates the double-stranded (ds)DNA. Forms a right-handed helical filament on oriC DNA; dsDNA binds to the exterior of the filament while single-stranded (ss)DNA is stabiized in the filament's interior. The ATP-DnaA-oriC complex binds and stabilizes one strand of the AT-rich DNA unwinding element (DUE), permitting loading of DNA polymerase. After initiation quickly degrades to an ADP-DnaA complex that is not apt for DNA replication. Binds acidic phospholipids. In Corynebacterium glutamicum (strain ATCC 13032 / DSM 20300 / JCM 1318 / BCRC 11384 / CCUG 27702 / LMG 3730 / NBRC 12168 / NCIMB 10025 / NRRL B-2784 / 534), this protein is Chromosomal replication initiator protein DnaA.